The chain runs to 198 residues: Ribonuclease HII (198 aa).

The RNase H type-2 domain occupies 10–198 (QLVAGVDEVG…PVKRALGLAS (189 aa)). 3 residues coordinate a divalent metal cation: aspartate 16, glutamate 17, and aspartate 108.

Belongs to the RNase HII family. The cofactor is Mn(2+). Requires Mg(2+) as cofactor.

It is found in the cytoplasm. The enzyme catalyses Endonucleolytic cleavage to 5'-phosphomonoester.. In terms of biological role, endonuclease that specifically degrades the RNA of RNA-DNA hybrids. The protein is Ribonuclease HII of Escherichia fergusonii (strain ATCC 35469 / DSM 13698 / CCUG 18766 / IAM 14443 / JCM 21226 / LMG 7866 / NBRC 102419 / NCTC 12128 / CDC 0568-73).